We begin with the raw amino-acid sequence, 235 residues long: Eukaryotic translation initiation factor 4E-1 (235 aa).

The segment at 1 to 36 (MVVEETIKATSTEDLSNTIANQNPRGRGGDEDEELE) is disordered. Polar residues predominate over residues 8 to 24 (KATSTEDLSNTIANQNP). 2 EIF4G-binding regions span residues 60 to 63 (HPLE) and 70 to 106 (FDNP…NNIH). Residues 78–83 (KQATWG), Lys-110, and 128–129 (WE) contribute to the mRNA site. Cys-133 and Cys-171 are oxidised to a cystine. Positions 154–163 (YTLLAMIGEQ) are EIF4G-binding. Residues 178-183 (RSGQDK) and 223-227 (KKFDR) contribute to the mRNA site.

This sequence belongs to the eukaryotic initiation factor 4E family. EIF4F is a multi-subunit complex, the composition of which varies with external and internal environmental conditions. It is composed of at least EIF4A, EIF4E and EIF4G. EIF4E is also known to interact with other partners. In higher plants two isoforms of EIF4F have been identified, named isoform EIF4F and isoform EIF(iso)4F. Isoform EIF4F has subunits p220 and p26, whereas isoform EIF(iso)4F has subunits p82 and p28. In terms of assembly, (Microbial infection) Interacts with potyvirus viral genome-linked protein (VPg); this interaction is possible in susceptible hosts but impaired in resistant plants. In terms of processing, according to the redox status, the Cys-133-Cys-171 disulfide bridge may have a role in regulating protein function by affecting its ability to bind capped mRNA.

It is found in the nucleus. The protein resides in the cytoplasm. Component of the protein complex eIF4F, which is involved in the recognition of the mRNA cap, ATP-dependent unwinding of 5'-terminal secondary structure and recruitment of mRNA to the ribosome. Recognizes and binds the 7-methylguanosine-containing mRNA cap during an early step in the initiation of protein synthesis and facilitates ribosome binding by inducing the unwinding of the mRNAs secondary structures. Key component of recessive resistance to potyviruses. Its function is as follows. (Microbial infection) Susceptibility host factor required for viral infection by recruiting viral RNAs to the host ribosomal complex via an interaction with viral genome-linked protein (VPg). This Citrullus lanatus (Watermelon) protein is Eukaryotic translation initiation factor 4E-1.